Reading from the N-terminus, the 63-residue chain is Protease 2 small chain (63 aa).

A Peptidase S8 domain is found at 11–63; that stretch reads QWGLSGTYGIRANTAWDNGYQGQGKIIAVVDTGITDHPDLLANRTSPLGYDFI.

Belongs to the peptidase S8 family. As to quaternary structure, heterodimer of a large and a small chain.

The protein resides in the secreted. The protein is Protease 2 small chain of Achromobacter lyticus.